A 278-amino-acid polypeptide reads, in one-letter code: Biotin synthase (278 aa).

The Radical SAM core domain maps to 1-227 (MQIMLCAISN…QSVVMVAGGR (227 aa)). 3 residues coordinate [4Fe-4S] cluster: Cys-16, Cys-20, and Cys-23. Residues Cys-60, Asn-96, and Cys-154 each contribute to the [2Fe-2S] cluster site.

The protein belongs to the radical SAM superfamily. Biotin synthase family. In terms of assembly, homodimer. The cofactor is [4Fe-4S] cluster. Requires [2Fe-2S] cluster as cofactor.

It carries out the reaction (4R,5S)-dethiobiotin + (sulfur carrier)-SH + 2 reduced [2Fe-2S]-[ferredoxin] + 2 S-adenosyl-L-methionine = (sulfur carrier)-H + biotin + 2 5'-deoxyadenosine + 2 L-methionine + 2 oxidized [2Fe-2S]-[ferredoxin]. It functions in the pathway cofactor biosynthesis; biotin biosynthesis; biotin from 7,8-diaminononanoate: step 2/2. Its function is as follows. Catalyzes the conversion of dethiobiotin (DTB) to biotin by the insertion of a sulfur atom into dethiobiotin via a radical-based mechanism. The polypeptide is Biotin synthase (Campylobacter jejuni subsp. jejuni serotype O:2 (strain ATCC 700819 / NCTC 11168)).